Reading from the N-terminus, the 295-residue chain is uncharacterized protein (295 aa).

Positions 1 to 19 (MHKLLLIITVFFTFNVAQA) are cleaved as a signal peptide.

This is an uncharacterized protein from Rickettsia prowazekii (strain Madrid E).